A 134-amino-acid chain; its full sequence is Large ribosomal subunit protein uL16c (134 aa).

This sequence belongs to the universal ribosomal protein uL16 family. As to quaternary structure, part of the 50S ribosomal subunit.

The protein resides in the plastid. It localises to the chloroplast. The polypeptide is Large ribosomal subunit protein uL16c (Pinus thunbergii (Japanese black pine)).